The sequence spans 443 residues: Ribosomal protein uS12 methylthiotransferase RimO (443 aa).

The MTTase N-terminal domain maps to 9–119 (PKIGMVSLGC…VVSAVHDAAP (111 aa)). Residues Cys-18, Cys-54, Cys-83, Cys-150, Cys-154, and Cys-157 each contribute to the [4Fe-4S] cluster site. A Radical SAM core domain is found at 136 to 373 (LTPRHYSYLK…MEKAAQISEA (238 aa)). The TRAM domain maps to 376 to 443 (QAKIGRDIAT…EHDLFGVALS (68 aa)).

The protein belongs to the methylthiotransferase family. RimO subfamily. It depends on [4Fe-4S] cluster as a cofactor.

The protein resides in the cytoplasm. The catalysed reaction is L-aspartate(89)-[ribosomal protein uS12]-hydrogen + (sulfur carrier)-SH + AH2 + 2 S-adenosyl-L-methionine = 3-methylsulfanyl-L-aspartate(89)-[ribosomal protein uS12]-hydrogen + (sulfur carrier)-H + 5'-deoxyadenosine + L-methionine + A + S-adenosyl-L-homocysteine + 2 H(+). In terms of biological role, catalyzes the methylthiolation of an aspartic acid residue of ribosomal protein uS12. This chain is Ribosomal protein uS12 methylthiotransferase RimO, found in Zymomonas mobilis subsp. mobilis (strain ATCC 31821 / ZM4 / CP4).